A 291-amino-acid polypeptide reads, in one-letter code: Cytosolic Fe-S cluster assembly factor CFD1 (291 aa).

24–31 (GKGGVGKS) is a binding site for ATP. Residues Cys-199 and Cys-202 each contribute to the [4Fe-4S] cluster site. The disordered stretch occupies residues 270 to 291 (ENEEEAKETAEEEKSRAATNGQ). The span at 276–285 (KETAEEEKSR) shows a compositional bias: basic and acidic residues.

This sequence belongs to the Mrp/NBP35 ATP-binding proteins family. NUBP2/CFD1 subfamily. As to quaternary structure, heterotetramer of 2 NBP35 and 2 CFD1 chains. It depends on [4Fe-4S] cluster as a cofactor.

The protein localises to the cytoplasm. Its function is as follows. Component of the cytosolic iron-sulfur (Fe/S) protein assembly (CIA) machinery. Required for maturation of extramitochondrial Fe-S proteins. The NBP35-CFD1 heterotetramer forms a Fe-S scaffold complex, mediating the de novo assembly of an Fe-S cluster and its transfer to target apoproteins. Required for biogenesis and export of both ribosomal subunits, which may reflect a role in assembly of the Fe/S clusters in RLI1, a protein which performs rRNA processing and ribosome export. This chain is Cytosolic Fe-S cluster assembly factor CFD1, found in Yarrowia lipolytica (strain CLIB 122 / E 150) (Yeast).